A 349-amino-acid polypeptide reads, in one-letter code: Thylakoid lumenal 29 kDa protein, chloroplastic (349 aa).

At Ser-155 the chain carries Phosphoserine.

Belongs to the peroxidase family.

The protein resides in the plastid. It is found in the chloroplast thylakoid lumen. The sequence is that of Thylakoid lumenal 29 kDa protein, chloroplastic (TL29) from Arabidopsis thaliana (Mouse-ear cress).